The chain runs to 434 residues: Adenylosuccinate synthetase (434 aa).

GTP is bound by residues 14-20 (GDEGKGK) and 42-44 (GHE). The active-site Proton acceptor is the aspartate 15. 2 residues coordinate Mg(2+): aspartate 15 and glycine 42. Residues 15 to 18 (DEGK), 40 to 43 (NSGH), threonine 133, arginine 147, asparagine 229, threonine 244, and arginine 308 contribute to the IMP site. The active-site Proton donor is histidine 43. 304 to 310 (VTTGRVR) is a binding site for substrate. Residues arginine 310, 336-338 (KLD), and 422-424 (GTG) each bind GTP.

It belongs to the adenylosuccinate synthetase family. As to quaternary structure, homodimer. It depends on Mg(2+) as a cofactor.

The protein resides in the cytoplasm. The enzyme catalyses IMP + L-aspartate + GTP = N(6)-(1,2-dicarboxyethyl)-AMP + GDP + phosphate + 2 H(+). It functions in the pathway purine metabolism; AMP biosynthesis via de novo pathway; AMP from IMP: step 1/2. Functionally, plays an important role in the salvage pathway for purine nucleotide biosynthesis. Catalyzes the first committed step in the biosynthesis of AMP from IMP. The sequence is that of Adenylosuccinate synthetase from Theileria parva (East coast fever infection agent).